Reading from the N-terminus, the 877-residue chain is DNA polymerase I (877 aa).

The 93-residue stretch at 180-272 (TPSQFIDLKA…GLEDTLLKEK (93 aa)) folds into the 5'-3' exonuclease domain. The 3'-5' exonuclease domain maps to 312–468 (FEIVTDKSSV…AKEKMMAELI (157 aa)).

Belongs to the DNA polymerase type-A family. As to quaternary structure, single-chain monomer with multiple functions.

It catalyses the reaction DNA(n) + a 2'-deoxyribonucleoside 5'-triphosphate = DNA(n+1) + diphosphate. In terms of biological role, in addition to polymerase activity, this DNA polymerase exhibits 3'-5' and 5'-3' exonuclease activity. The protein is DNA polymerase I (polA) of Lactococcus lactis subsp. cremoris (strain MG1363).